A 370-amino-acid chain; its full sequence is S-adenosylmethionine:tRNA ribosyltransferase-isomerase (370 aa).

The protein belongs to the QueA family. Monomer.

It is found in the cytoplasm. The catalysed reaction is 7-aminomethyl-7-carbaguanosine(34) in tRNA + S-adenosyl-L-methionine = epoxyqueuosine(34) in tRNA + adenine + L-methionine + 2 H(+). It functions in the pathway tRNA modification; tRNA-queuosine biosynthesis. Transfers and isomerizes the ribose moiety from AdoMet to the 7-aminomethyl group of 7-deazaguanine (preQ1-tRNA) to give epoxyqueuosine (oQ-tRNA). The sequence is that of S-adenosylmethionine:tRNA ribosyltransferase-isomerase from Synechococcus sp. (strain WH7803).